Reading from the N-terminus, the 291-residue chain is 4-diphosphocytidyl-2-C-methyl-D-erythritol kinase (291 aa).

K11 is an active-site residue. Residue 94–104 (PAGSGLGGGSA) coordinates ATP. The active site involves D136.

It belongs to the GHMP kinase family. IspE subfamily.

It catalyses the reaction 4-CDP-2-C-methyl-D-erythritol + ATP = 4-CDP-2-C-methyl-D-erythritol 2-phosphate + ADP + H(+). The protein operates within isoprenoid biosynthesis; isopentenyl diphosphate biosynthesis via DXP pathway; isopentenyl diphosphate from 1-deoxy-D-xylulose 5-phosphate: step 3/6. Functionally, catalyzes the phosphorylation of the position 2 hydroxy group of 4-diphosphocytidyl-2C-methyl-D-erythritol. The chain is 4-diphosphocytidyl-2-C-methyl-D-erythritol kinase from Treponema pallidum (strain Nichols).